The sequence spans 298 residues: UDP-N-acetylenolpyruvoylglucosamine reductase (298 aa).

In terms of domain architecture, FAD-binding PCMH-type spans 26-191 (KTGGEAEYLA…LSATFSLTPG (166 aa)). Residue R170 is part of the active site. The active-site Proton donor is the S220. E290 is an active-site residue.

It belongs to the MurB family. The cofactor is FAD.

The protein resides in the cytoplasm. It carries out the reaction UDP-N-acetyl-alpha-D-muramate + NADP(+) = UDP-N-acetyl-3-O-(1-carboxyvinyl)-alpha-D-glucosamine + NADPH + H(+). It functions in the pathway cell wall biogenesis; peptidoglycan biosynthesis. In terms of biological role, cell wall formation. This Lactobacillus helveticus (strain DPC 4571) protein is UDP-N-acetylenolpyruvoylglucosamine reductase.